An 878-amino-acid polypeptide reads, in one-letter code: Phosphoenolpyruvate carboxylase (878 aa).

Active-site residues include histidine 138 and lysine 544.

This sequence belongs to the PEPCase type 1 family. Mg(2+) is required as a cofactor.

It carries out the reaction oxaloacetate + phosphate = phosphoenolpyruvate + hydrogencarbonate. Its function is as follows. Forms oxaloacetate, a four-carbon dicarboxylic acid source for the tricarboxylic acid cycle. The protein is Phosphoenolpyruvate carboxylase of Psychromonas ingrahamii (strain DSM 17664 / CCUG 51855 / 37).